The following is a 421-amino-acid chain: Growth arrest-specific protein 7 (421 aa).

The interval 1–117 (MATALQKPGM…SPGRKQSKEN (117 aa)) is disordered. Residues 22–55 (VILPPGWHSYLSPQGRRYYVNTTTNETTWERPSS) enclose the WW domain. Residues 41 to 52 (VNTTTNETTWER) are compositionally biased toward polar residues. Low complexity predominate over residues 53–65 (PSSSPGISASPAP). Ser-62 and Ser-108 each carry phosphoserine. Residues 95–117 (RKSTGDSQNLGSSSPGRKQSKEN) are compositionally biased toward polar residues. The F-BAR domain occupies 141–401 (TEWSYCDYFW…LLRKVDPAKD (261 aa)). A coiled-coil region spans residues 254–328 (ENFKKDMKKC…RKSTQAGDDL (75 aa)).

As to expression, expressed abundantly in brain with lower levels in heart and testis. In the brain, expressed prominently in the Purkinje layer of the cerebellum, moderately in hippocampus, and less extensively in cerebral cortex and caudate putamen.

Its subcellular location is the cytoplasm. Functionally, may play a role in promoting maturation and morphological differentiation of cerebellar neurons. This chain is Growth arrest-specific protein 7 (Gas7), found in Mus musculus (Mouse).